The sequence spans 279 residues: uncharacterized protein (279 aa).

This is an uncharacterized protein from Acanthamoeba polyphaga (Amoeba).